Reading from the N-terminus, the 115-residue chain is Large ribosomal subunit protein bL20c (115 aa).

This sequence belongs to the bacterial ribosomal protein bL20 family.

Its subcellular location is the plastid. The protein localises to the chloroplast. In terms of biological role, binds directly to 23S ribosomal RNA and is necessary for the in vitro assembly process of the 50S ribosomal subunit. It is not involved in the protein synthesizing functions of that subunit. In Cyanidium caldarium (Red alga), this protein is Large ribosomal subunit protein bL20c (rpl20).